Reading from the N-terminus, the 411-residue chain is LL-diaminopimelate aminotransferase (411 aa).

Residues tyrosine 15 and glycine 42 each contribute to the substrate site. Pyridoxal 5'-phosphate-binding positions include tyrosine 72, 108–109, tyrosine 132, asparagine 188, tyrosine 219, and 247–249; these read AK and SFS. Lysine 109, tyrosine 132, and asparagine 188 together coordinate substrate. Lysine 250 carries the N6-(pyridoxal phosphate)lysine modification. Pyridoxal 5'-phosphate contacts are provided by arginine 258 and asparagine 293. Residues asparagine 293 and arginine 389 each coordinate substrate.

It belongs to the class-I pyridoxal-phosphate-dependent aminotransferase family. LL-diaminopimelate aminotransferase subfamily. Homodimer. Pyridoxal 5'-phosphate serves as cofactor.

The catalysed reaction is (2S,6S)-2,6-diaminopimelate + 2-oxoglutarate = (S)-2,3,4,5-tetrahydrodipicolinate + L-glutamate + H2O + H(+). It functions in the pathway amino-acid biosynthesis; L-lysine biosynthesis via DAP pathway; LL-2,6-diaminopimelate from (S)-tetrahydrodipicolinate (aminotransferase route): step 1/1. Involved in the synthesis of meso-diaminopimelate (m-DAP or DL-DAP), required for both lysine and peptidoglycan biosynthesis. Catalyzes the direct conversion of tetrahydrodipicolinate to LL-diaminopimelate. Is also able to catalyze the reverse reaction in vitro, i.e. the transamination of LL-diaminopimelate with 2-oxoglutarate to produce tetrahydrodipicolinate and glutamate. Can also use m-DAP instead of LL-DAP as the amino-group donor, and oxaloacetate or pyruvate as the amino-group acceptor. The polypeptide is LL-diaminopimelate aminotransferase (Desulfitobacterium hafniense (strain DSM 10664 / DCB-2)).